Reading from the N-terminus, the 191-residue chain is Potassium-transporting ATPase KdpC subunit (191 aa).

Residues 7–27 (ASLVLFLSLTLLTGVAYPLLV) traverse the membrane as a helical segment.

Belongs to the KdpC family. In terms of assembly, the system is composed of three essential subunits: KdpA, KdpB and KdpC.

It localises to the cell inner membrane. Part of the high-affinity ATP-driven potassium transport (or Kdp) system, which catalyzes the hydrolysis of ATP coupled with the electrogenic transport of potassium into the cytoplasm. This subunit acts as a catalytic chaperone that increases the ATP-binding affinity of the ATP-hydrolyzing subunit KdpB by the formation of a transient KdpB/KdpC/ATP ternary complex. This Methylibium petroleiphilum (strain ATCC BAA-1232 / LMG 22953 / PM1) protein is Potassium-transporting ATPase KdpC subunit.